Here is an 871-residue protein sequence, read N- to C-terminus: DNA mismatch repair protein MutS (871 aa).

625-632 (GPNMAGKS) is a binding site for ATP.

Belongs to the DNA mismatch repair MutS family.

Functionally, this protein is involved in the repair of mismatches in DNA. It is possible that it carries out the mismatch recognition step. This protein has a weak ATPase activity. The protein is DNA mismatch repair protein MutS of Chlorobium limicola (strain DSM 245 / NBRC 103803 / 6330).